Reading from the N-terminus, the 61-residue chain is Large ribosomal subunit protein uL30 (61 aa).

It belongs to the universal ribosomal protein uL30 family. Part of the 50S ribosomal subunit.

The protein is Large ribosomal subunit protein uL30 of Caulobacter vibrioides (strain ATCC 19089 / CIP 103742 / CB 15) (Caulobacter crescentus).